A 198-amino-acid polypeptide reads, in one-letter code: Threonylcarbamoyl-AMP synthase (198 aa).

The YrdC-like domain maps to 15–198 (LLKIYHIIKL…AISGQLIRRG (184 aa)).

The protein belongs to the SUA5 family. TsaC subfamily.

It is found in the cytoplasm. It carries out the reaction L-threonine + hydrogencarbonate + ATP = L-threonylcarbamoyladenylate + diphosphate + H2O. In terms of biological role, required for the formation of a threonylcarbamoyl group on adenosine at position 37 (t(6)A37) in tRNAs that read codons beginning with adenine. Catalyzes the conversion of L-threonine, HCO(3)(-)/CO(2) and ATP to give threonylcarbamoyl-AMP (TC-AMP) as the acyladenylate intermediate, with the release of diphosphate. In Baumannia cicadellinicola subsp. Homalodisca coagulata, this protein is Threonylcarbamoyl-AMP synthase.